The primary structure comprises 246 residues: 5-oxoprolinase subunit A (246 aa).

Belongs to the LamB/PxpA family. As to quaternary structure, forms a complex composed of PxpA, PxpB and PxpC.

The enzyme catalyses 5-oxo-L-proline + ATP + 2 H2O = L-glutamate + ADP + phosphate + H(+). Functionally, catalyzes the cleavage of 5-oxoproline to form L-glutamate coupled to the hydrolysis of ATP to ADP and inorganic phosphate. In Cupriavidus pinatubonensis (strain JMP 134 / LMG 1197) (Cupriavidus necator (strain JMP 134)), this protein is 5-oxoprolinase subunit A.